A 1051-amino-acid polypeptide reads, in one-letter code: Probable valine--tRNA ligase, mitochondrial (1051 aa).

A mitochondrion-targeting transit peptide spans 1–20; it reads MNKLLFLSKKSSTSNLYRFY. The 'HIGH' region motif lies at 71–81; it reads PNVTGSLHIGH. Positions 606-610 match the 'KMSKS' region motif; it reads KMSKS. K609 contacts ATP. A coiled-coil region spans residues 972–1019; sequence KELQISIEFDKEINNQLNQKLINPNQSNDKKILKLENFIKQLQDEIDN.

This sequence belongs to the class-I aminoacyl-tRNA synthetase family.

It is found in the mitochondrion. It catalyses the reaction tRNA(Val) + L-valine + ATP = L-valyl-tRNA(Val) + AMP + diphosphate. This chain is Probable valine--tRNA ligase, mitochondrial (valS2), found in Dictyostelium discoideum (Social amoeba).